The following is a 564-amino-acid chain: Histone acetyltransferase rtt109 (564 aa).

Residues Phe-138, 157–159 (HVL), and Trp-167 each bind acetyl-CoA. Catalysis depends on Asp-261, which acts as the Proton donor/acceptor. Lys-263 carries the N6-acetyllysine; by autocatalysis modification. 2 disordered regions span residues 355-420 (YDKV…NAFY) and 506-549 (RKKD…ESPG). Positions 366 to 377 (AVSVSTDSQSSD) are enriched in low complexity. 2 stretches are compositionally biased toward polar residues: residues 394 to 417 (DPSTQTGSLSSETHPKVQPNTDQN) and 512 to 521 (SQATTATSAQ). A compositionally biased stretch (low complexity) spans 529-544 (GTVSTAVTAEASTTGT).

The protein belongs to the RTT109 family.

The protein resides in the nucleus. The protein localises to the vacuole. The catalysed reaction is L-lysyl-[protein] + acetyl-CoA = N(6)-acetyl-L-lysyl-[protein] + CoA + H(+). It catalyses the reaction L-lysyl-[histone] + acetyl-CoA = N(6)-acetyl-L-lysyl-[histone] + CoA + H(+). Histone chaperone-dependent acetylase that modifies 'Lys-56' of histone H3 (H3K56ac). Histone H3 'Lys-56' acetylation may be required for S-phase-linked DNA damage tolerance. Also acetylates 'Lys-9' of histone H3 (H3K9ac). Autoacetylates. This is Histone acetyltransferase rtt109 from Aspergillus flavus.